Consider the following 197-residue polypeptide: Na(+)-translocating NADH-quinone reductase subunit E (197 aa).

Helical transmembrane passes span 11 to 31 (SVFIENMALSFFLGMCTFLAV), 35 to 55 (VSTAFGLGVAVIFVLGLSVPA), 76 to 96 (FLKFITFIGVIAALVQILEMF), 108 to 128 (LGIYLPLITVNCAIFGAVSFM), 139 to 159 (VVYGFGAGLGWMLAIVALAGI), and 175 to 195 (LGITFIAAGLMAMAFMSFSGI).

The protein belongs to the NqrDE/RnfAE family. Composed of six subunits; NqrA, NqrB, NqrC, NqrD, NqrE and NqrF.

The protein localises to the cell inner membrane. The catalysed reaction is a ubiquinone + n Na(+)(in) + NADH + H(+) = a ubiquinol + n Na(+)(out) + NAD(+). Its function is as follows. NQR complex catalyzes the reduction of ubiquinone-1 to ubiquinol by two successive reactions, coupled with the transport of Na(+) ions from the cytoplasm to the periplasm. NqrA to NqrE are probably involved in the second step, the conversion of ubisemiquinone to ubiquinol. The polypeptide is Na(+)-translocating NADH-quinone reductase subunit E (Neisseria meningitidis serogroup A / serotype 4A (strain DSM 15465 / Z2491)).